A 525-amino-acid chain; its full sequence is MSASEGMKFQFHSGEKVLCFEPDPTKARVLYDAKIIDVIIGKDEKGRKIPEYLIHFNGWNRSWDRWAAEEHVLHDTDENRRLQRKLAKKAIARLRGTGKKKRRCRLPGVDSVLKSVPVKEKSKNDENSVSSTCHESCGEKNGGIKEHRQRRIKVKAKAKKKVLSLRSRKEMDERTITIDIPDVLKKQLEDDCYYINRRKRLVKLPCQTNIITILESYVKHFAINAAFSANERPRHHHAMMHTHMNVHYVPAEKNVDLCKEMVDGLRITFDYTLPLVLLYPYEQTQYKRVTSSKFFLPIKESTTTTNRSQEELSPSPPLLNPSTPQSTESQPPTGEPATPKRRKAEPEALQSLRRSTRHSTNCDRLSESSSSPQPKRRQQDTSASMPKLFLHLEKKTPVHSRSSSPIPLTPSKDGSAVFAGFEGRRPNEINEVLSWKLVPDNYPPGDQPPPPSYIYGAQHLLRLFVKLPEILGKMSFSEKNLKALLKHFDLFLRFLAEYHDDFFPESAYVAACEAHYSTKNPRAIY.

Residues 13–72 (SGEKVLCFEPDPTKARVLYDAKIIDVIIGKDEKGRKIPEYLIHFNGWNRSWDRWAAEEHV) form the Tudor-knot domain. 2 disordered regions span residues 119–148 (KEKS…KEHR) and 302–383 (TTTT…DTSA). The span at 136 to 146 (SCGEKNGGIKE) shows a compositional bias: basic and acidic residues. The MRG domain maps to 172-521 (DERTITIDIP…CEAHYSTKNP (350 aa)). Residues 294–444 (FFLPIKESTT…WKLVPDNYPP (151 aa)) are required for the histone acetyltransferase activity of the MSL complex. Residues S313 and S315 each carry the phosphoserine modification. A compositionally biased stretch (low complexity) spans 320 to 332 (NPSTPQSTESQPP). A phosphoserine mark is found at S371 and S404. Position 409 is a phosphothreonine (T409). Residues S411 and S415 each carry the phosphoserine modification.

As to quaternary structure, component of the MSL histone acetyltransferase complex at least composed of the KAT8/MOF, MSL1/hampin, MSL2 and MSL3. Interacts (via the MRG domain) with MSL1 and KAT8/MOF. In terms of tissue distribution, in testis, expression is mostly restricted to the spermatocyte stage and only in a small portion of spermatogonia.

The protein localises to the nucleus. In terms of biological role, non-catalytic component of the MSL histone acetyltransferase complex, a multiprotein complex that mediates the majority of histone H4 acetylation at 'Lys-16' (H4K16ac), an epigenetic mark that prevents chromatin compaction. The MSL complex is required for chromosome stability and genome integrity by maintaining homeostatic levels of H4K16ac. The MSL complex is also involved in gene dosage by promoting up-regulation of genes expressed by the X chromosome. X up-regulation is required to compensate for autosomal biallelic expression. The MSL complex also participates in gene dosage compensation by promoting expression of Tsix non-coding RNA. Acts as a histone reader that specifically recognizes and binds histone H4 monomethylated at 'Lys-20' (H4K20Me1) in a DNA-dependent manner and is proposed to be involved in chromosomal targeting of the MSL complex. May play a role X inactivation in females. The protein is MSL complex subunit 3 of Mus musculus (Mouse).